Consider the following 395-residue polypeptide: MCDQTFLVNVFGSCDKCFKQRALRPVFKKSQQLNYCSTCAEIMATDGLHENETLASLKSEAESLKGKLEEERAKLHDVELHQVAERVEALGQFVMKTRRTLKGHGNKVLCMDWCKDKRRIVSSSQDGKVIVWDSFTTNKEHAVTMPCTWVMACAYAPSGCAIACGGLDNKCSVYPLTFDKNENMAAKKKSVAMHTNYLSACSFTNSDMQILTASGDGTCALWDVESGQLLQSFHGHGADVLCLDLAPSETGNTFVSGGCDKKAMVWDMRSGQCVQAFETHESDVNSVRYYPSGDAFASGSDDATCRLYDLRADREVAIYSKESIIFGASSVDFSLSGRLLFAGYNDYTINVWDVLKGSRVSILFGHENRVSTLRVSPDGTAFCSGSWDHTLRVWA.

WD repeat units lie at residues Gly103–Ala142, Met145–Met184, Met193–His234, His236–Glu278, Thr279–Ile318, Ser320–Ile362, and Gly365–Trp394.

Belongs to the WD repeat G protein beta family. As to quaternary structure, component of a complex composed of RGS9 (isoform RGS9-1), GNB5 and RGS9BP; within this complex, the presence of GNB5 stabilizes both itself and RGS9 and increases RGS9 GTPase-activating protein (GAP) activity. Interacts with RGS7, forming the RGS7-GNB5 complex; within this complex, the presence of GNB5 increases RGS7 GTPase-activating protein (GAP) activity. Interacts with GPR158; promotes the GTPase activator activity of the RGS7-GNB5 complex in absence of glycine, in contrast GTPase activator activity of the RGS7-GNB5 complex is inhibited in presence of glycine. Interacts with RGS6. Isoform 1 is only detected in retina. Isoform 2 is detected in brain (at protein level). Isoform 2 is detected in brain.

It is found in the membrane. In terms of biological role, enhances GTPase-activating protein (GAP) activity of regulator of G protein signaling (RGS) proteins, such as RGS7 and RGS9, hence involved in the termination of the signaling initiated by the G protein coupled receptors (GPCRs) by accelerating the GTP hydrolysis on the G-alpha subunits, thereby promoting their inactivation. Increases RGS7 GTPase-activating protein (GAP) activity, thereby regulating mood and cognition. Increases RGS9 GTPase-activating protein (GAP) activity, hence contributes to the deactivation of G protein signaling initiated by D(2) dopamine receptors. May play an important role in neuronal signaling, including in the parasympathetic, but not sympathetic, control of heart rate. The chain is Guanine nucleotide-binding protein subunit beta-5 (Gnb5) from Mus musculus (Mouse).